A 128-amino-acid chain; its full sequence is Large ribosomal subunit protein bL17 (128 aa).

This sequence belongs to the bacterial ribosomal protein bL17 family. Part of the 50S ribosomal subunit. Contacts protein L32.

This chain is Large ribosomal subunit protein bL17, found in Streptococcus pyogenes serotype M5 (strain Manfredo).